The following is a 140-amino-acid chain: Putative pre-16S rRNA nuclease (140 aa).

The protein belongs to the YqgF nuclease family.

It localises to the cytoplasm. Its function is as follows. Could be a nuclease involved in processing of the 5'-end of pre-16S rRNA. In Endomicrobium trichonymphae, this protein is Putative pre-16S rRNA nuclease.